Reading from the N-terminus, the 211-residue chain is Large ribosomal subunit protein uL3 (211 aa).

Polar residues predominate over residues 130–139 (QDATHGNSLS). The segment at 130–151 (QDATHGNSLSHRAPGSIGQNQT) is disordered. N5-methylglutamine is present on Gln-150.

This sequence belongs to the universal ribosomal protein uL3 family. Part of the 50S ribosomal subunit. Forms a cluster with proteins L14 and L19. In terms of processing, methylated by PrmB.

Functionally, one of the primary rRNA binding proteins, it binds directly near the 3'-end of the 23S rRNA, where it nucleates assembly of the 50S subunit. The protein is Large ribosomal subunit protein uL3 of Alcanivorax borkumensis (strain ATCC 700651 / DSM 11573 / NCIMB 13689 / SK2).